Reading from the N-terminus, the 418-residue chain is UDP-N-acetylglucosamine 1-carboxyvinyltransferase (418 aa).

22–23 is a phosphoenolpyruvate binding site; the sequence is KN. Arg91 lines the UDP-N-acetyl-alpha-D-glucosamine pocket. Cys115 (proton donor) is an active-site residue. Cys115 is subject to 2-(S-cysteinyl)pyruvic acid O-phosphothioketal. UDP-N-acetyl-alpha-D-glucosamine is bound by residues Asp303 and Ile325.

Belongs to the EPSP synthase family. MurA subfamily.

The protein resides in the cytoplasm. It carries out the reaction phosphoenolpyruvate + UDP-N-acetyl-alpha-D-glucosamine = UDP-N-acetyl-3-O-(1-carboxyvinyl)-alpha-D-glucosamine + phosphate. Its pathway is cell wall biogenesis; peptidoglycan biosynthesis. In terms of biological role, cell wall formation. Adds enolpyruvyl to UDP-N-acetylglucosamine. This chain is UDP-N-acetylglucosamine 1-carboxyvinyltransferase, found in Syntrophobacter fumaroxidans (strain DSM 10017 / MPOB).